The primary structure comprises 379 residues: MKILRKNHPLLKIVNHSFIDLPTPSNISSWWNFGSLLGMCLMIQILTGLFLAMHYTSDTTTAFSSVAHICRDVNYGWLIRYLHANGASMFFICLFIHVGRGIYYGSYVLSETWNIGIILFLTTMATAFVGYVLPWGQMSFWGATVITNLLSAIPYIGNTLVEWIWGGFSVDKATLTRFFAFHFILPFIITAFALVHLLFLHETGSNNPSGLNSDSDKIPFHPYYTTKDLLGIFLLLLVLMILALFFPDILGDPDNFTPANPLNTPAHIKPEWYFLFAYAILRSIPNKLGGVLALVLSILILAAFPLLNNSKQHGLIFRPITQVIYWIFIANLLVLTWIGGQPVEYPFTMIGQIASITYFAIIIILIPISNTIENNIIKL.

Helical transmembrane passes span 33-53 (FGSLLGMCLMIQILTGLFLAM), 77-98 (WLIRYLHANGASMFFICLFIHV), 113-133 (WNIGIILFLTTMATAFVGYVL), and 178-198 (FFAFHFILPFIITAFALVHLL). Positions 83 and 97 each coordinate heme b. Heme b-binding residues include histidine 182 and histidine 196. Histidine 201 provides a ligand contact to a ubiquinone. The next 4 membrane-spanning stretches (helical) occupy residues 226-246 (TKDLLGIFLLLLVLMILALFF), 288-308 (LGGVLALVLSILILAAFPLLN), 320-340 (ITQVIYWIFIANLLVLTWIGG), and 347-367 (FTMIGQIASITYFAIIIILIP).

It belongs to the cytochrome b family. As to quaternary structure, the cytochrome bc1 complex contains 11 subunits: 3 respiratory subunits (MT-CYB, CYC1 and UQCRFS1), 2 core proteins (UQCRC1 and UQCRC2) and 6 low-molecular weight proteins (UQCRH/QCR6, UQCRB/QCR7, UQCRQ/QCR8, UQCR10/QCR9, UQCR11/QCR10 and a cleavage product of UQCRFS1). This cytochrome bc1 complex then forms a dimer. It depends on heme b as a cofactor.

It is found in the mitochondrion inner membrane. Component of the ubiquinol-cytochrome c reductase complex (complex III or cytochrome b-c1 complex) that is part of the mitochondrial respiratory chain. The b-c1 complex mediates electron transfer from ubiquinol to cytochrome c. Contributes to the generation of a proton gradient across the mitochondrial membrane that is then used for ATP synthesis. This is Cytochrome b (MT-CYB) from Akodon spegazzinii (Spegazzini's grass mouse).